The following is a 240-amino-acid chain: Proteasome subunit beta type-1 (240 aa).

At M1 the chain carries N-acetylmethionine. Residues 1-27 (MLSTAAYRDPDRELVMGPQGSAGPVQM) constitute a propeptide that is removed on maturation. An O-linked (GlcNAc) serine glycan is attached at S57. Residues S61 and S67 each carry the phosphoserine modification. Phosphotyrosine is present on Y149. Residue S161 is modified to Phosphoserine. K203 carries the N6-acetyllysine modification. S208 is a glycosylation site (O-linked (GlcNAc) serine).

This sequence belongs to the peptidase T1B family. As to quaternary structure, the 26S proteasome consists of a 20S proteasome core and two 19S regulatory subunits. The 20S proteasome core is a barrel-shaped complex made of 28 subunits that are arranged in four stacked rings. The two outer rings are each formed by seven alpha subunits, and the two inner rings are formed by seven beta subunits. The proteolytic activity is exerted by three beta-subunits PSMB5, PSMB6 and PSMB7. Interacts with SERPINB2. Interacts with RFPL4A. As to expression, ubiquitous.

It is found in the cytoplasm. The protein resides in the nucleus. Its function is as follows. Non-catalytic component of the 20S core proteasome complex involved in the proteolytic degradation of most intracellular proteins. This complex plays numerous essential roles within the cell by associating with different regulatory particles. Associated with two 19S regulatory particles, forms the 26S proteasome and thus participates in the ATP-dependent degradation of ubiquitinated proteins. The 26S proteasome plays a key role in the maintenance of protein homeostasis by removing misfolded or damaged proteins that could impair cellular functions, and by removing proteins whose functions are no longer required. Associated with the PA200 or PA28, the 20S proteasome mediates ubiquitin-independent protein degradation. This type of proteolysis is required in several pathways including spermatogenesis (20S-PA200 complex) or generation of a subset of MHC class I-presented antigenic peptides (20S-PA28 complex). The protein is Proteasome subunit beta type-1 (Psmb1) of Rattus norvegicus (Rat).